The following is a 174-amino-acid chain: Co-chaperone protein HscB homolog (174 aa).

The region spanning 2-74 is the J domain; the sequence is NYFELFKFPP…IRRAEHMLSL (73 aa).

This sequence belongs to the HscB family. As to quaternary structure, interacts with HscA and stimulates its ATPase activity.

Co-chaperone involved in the maturation of iron-sulfur cluster-containing proteins. Seems to help targeting proteins to be folded toward HscA. This chain is Co-chaperone protein HscB homolog, found in Shewanella baltica (strain OS195).